The sequence spans 453 residues: Presenilin-like protein At1g08700 (453 aa).

The Cytoplasmic portion of the chain corresponds to 1–8; the sequence is MESSILDS. Residues 9–29 traverse the membrane as a helical segment; the sequence is LGVEIIGVMAPVSICMFLVVL. Residues 30 to 68 lie on the Lumenal side of the membrane; sequence LTYSLSVTSDPQIRSAANLIYIENPSDSTTVKLEGSLAN. The chain crosses the membrane as a helical span at residues 69-89; the sequence is AIVFVVLIAAVTFILVLLFYY. Residues 90 to 103 lie on the Cytoplasmic side of the membrane; sequence NFTNFLKHYMRFSA. A helical transmembrane segment spans residues 104-124; sequence FFVLGTMGGAIFLSIIQHFSI. The Lumenal portion of the chain corresponds to 125–132; sequence PVDSITCF. A helical transmembrane segment spans residues 133–153; it reads ILLFNFTILGTLSVFAGGIPI. Residues 154–159 are Cytoplasmic-facing; sequence VLRQCY. 2 consecutive transmembrane segments (helical) span residues 160 to 180 and 181 to 201; these read MVVM…WTTW and FILV…GGPL. Asp-190 is a catalytic residue. Topologically, residues 202–369 are cytoplasmic; the sequence is KLLVELASSR…VVDISNRGIK (168 aa). Disordered stretches follow at residues 226–248 and 292–329; these read VSSG…GGGV and IGNG…DRES. Low complexity predominate over residues 227 to 240; that stretch reads SSGNQRRNRGSSLR. A Phosphoserine modification is found at Ser-296. Residues 309-320 show a composition bias toward polar residues; sequence PSASEHSTSVGT. Residues 370–390 traverse the membrane as a helical segment; sequence LGLGDFIFYSVLVGRAAMYDL. The active site involves Asp-374. At 391 to 392 the chain is on the lumenal side; the sequence is MT. A helical membrane pass occupies residues 393–413; the sequence is VYACYLAIISGLGCTLILLSV. At 414–417 the chain is on the cytoplasmic side; it reads YNRA. The helical intramembrane region spans 418–438; sequence LPALPISIMLGVVFYFLTRLL. Residues 419-421 carry the PAL motif; that stretch reads PAL. Topologically, residues 439–453 are cytoplasmic; sequence MEPFVVGVTTNLMMF.

The protein belongs to the peptidase A22A family. Homodimer. Probable component of the gamma-secretase complex, a complex composed of a presenilin homodimer, nicastrin, APH1 and PEN2.

It is found in the endoplasmic reticulum membrane. The protein localises to the golgi apparatus membrane. Probable subunit of the gamma-secretase complex, an endoprotease complex that catalyzes the intramembrane cleavage of integral membrane proteins such as Notch receptors. This Arabidopsis thaliana (Mouse-ear cress) protein is Presenilin-like protein At1g08700.